Consider the following 456-residue polypeptide: Adenylosuccinate lyase (456 aa).

Residues 15–16, 90–92, and 122–123 each bind N(6)-(1,2-dicarboxyethyl)-AMP; these read RY, NHD, and TS. The Proton donor/acceptor role is filled by His171. Gln247 contributes to the N(6)-(1,2-dicarboxyethyl)-AMP binding site. The active-site Proton donor/acceptor is Ser295. Residues Ser296, 301–303, Asn309, Arg335, and 340–344 contribute to the N(6)-(1,2-dicarboxyethyl)-AMP site; these read KVN and STVLR.

Belongs to the lyase 1 family. Adenylosuccinate lyase subfamily. As to quaternary structure, homotetramer. Residues from neighboring subunits contribute catalytic and substrate-binding residues to each active site.

It carries out the reaction N(6)-(1,2-dicarboxyethyl)-AMP = fumarate + AMP. The enzyme catalyses (2S)-2-[5-amino-1-(5-phospho-beta-D-ribosyl)imidazole-4-carboxamido]succinate = 5-amino-1-(5-phospho-beta-D-ribosyl)imidazole-4-carboxamide + fumarate. The protein operates within purine metabolism; AMP biosynthesis via de novo pathway; AMP from IMP: step 2/2. Its pathway is purine metabolism; IMP biosynthesis via de novo pathway; 5-amino-1-(5-phospho-D-ribosyl)imidazole-4-carboxamide from 5-amino-1-(5-phospho-D-ribosyl)imidazole-4-carboxylate: step 2/2. Catalyzes two reactions in de novo purine nucleotide biosynthesis. Catalyzes the breakdown of 5-aminoimidazole- (N-succinylocarboxamide) ribotide (SAICAR or 2-[5-amino-1-(5-phospho-beta-D-ribosyl)imidazole-4-carboxamido]succinate) to 5-aminoimidazole-4-carboxamide ribotide (AICAR or 5-amino-1-(5-phospho-beta-D-ribosyl)imidazole-4-carboxamide) and fumarate, and of adenylosuccinate (ADS or N(6)-(1,2-dicarboxyethyl)-AMP) to adenosine monophosphate (AMP) and fumarate. The sequence is that of Adenylosuccinate lyase (purB) from Legionella pneumophila (strain Corby).